The following is a 122-amino-acid chain: Large ribosomal subunit protein uL14c (122 aa).

It belongs to the universal ribosomal protein uL14 family. In terms of assembly, part of the 50S ribosomal subunit.

The protein resides in the plastid. Its subcellular location is the chloroplast. Functionally, binds to 23S rRNA. The polypeptide is Large ribosomal subunit protein uL14c (Stigeoclonium helveticum (Green alga)).